We begin with the raw amino-acid sequence, 255 residues long: Phosphate import ATP-binding protein PstB (255 aa).

The ABC transporter domain occupies I8–I250. G40 to S47 provides a ligand contact to ATP.

This sequence belongs to the ABC transporter superfamily. Phosphate importer (TC 3.A.1.7) family. In terms of assembly, the complex is composed of two ATP-binding proteins (PstB), two transmembrane proteins (PstC and PstA) and a solute-binding protein (PstS).

The protein localises to the cell inner membrane. The catalysed reaction is phosphate(out) + ATP + H2O = ADP + 2 phosphate(in) + H(+). Functionally, part of the ABC transporter complex PstSACB involved in phosphate import. Responsible for energy coupling to the transport system. The sequence is that of Phosphate import ATP-binding protein PstB from Pelagibacter ubique (strain HTCC1062).